A 981-amino-acid polypeptide reads, in one-letter code: MKILYSLLLISSIILNTVLNISSQVYDQRILALKGKCYLDSNKNALYDEGEPGFGNVEISLGNATDYKGNKYPIRYSSADGTFIYDGLTQRTTYEFTFTNPKDYYFETYEKTLACPPGVPCIRPTVSADNLAADLLVANTFAYNIPLIKQVGVSSGSSILTVRISVDLGYVEQTQPPTQPPTQPPTQPPTPPPFTGSAVAGLLFTDINGNGIFDGRDVWTSNVSVGLYNFNDKTRALDVNGNVISSITTDANGRYAFENVANGVYCLWMEGTKYFNPGCVGRIEINSATMPKSVASDGVQSPTILRAGSFSLFLTGNSGYGGYAYNDIDLNGYLSSRDQGIAGIIVKIYLPVYNFLFGTVTTDSNGRWSFSGLQPGFPVRIEFVIPNDFTSTGANLVNFVTVGQSIDLSIGLIPKSLTGVNAGPSNPKSFVTTCFVKGSYNGKYKDEPTVVEINKDAQGKAYAQQSADYMKVLASHKDTGSVHGVAFNPDNGDKFVSSYHKTNSDFGPSGSCAIYKLSSGIITTHVNFNDVFGKSYCGGYAHYFDFREISTAGPLVGKASLGQMTYYNKKLYVTNLGKNEILVVPIYQNPNATNVERIPVANPGCSSGDDWHIFPVTVFQGELFTGGVCSGEKGSRLSTYILKYNPNSKSFSTVLFYTLGYARGCRYLDSFGSCVSSVWQKWSNNDSPQALLSTIIFDVSGHLIMAYKDRSGDISAVVSAPELLIACLGTDGLFYLESGGKCGSLVGAGVDQKSLTGLRYGPGNGNFFDNHKTGLHDYTNAFGATKGGRDIIVTTGFDYYEAFEGSIRWYNATSGKQLKGYSLYITSSNGRTPSPTFGKQNGLGDITSVYDSSLPQYRVGRVWLDINGNGIQDAGEPGISGITVFLIYGQQSTPTSQTVSDSNGYFKFEVDFSSNYYCVIPVAFFQAGSSITMRNADPTHPNTNSDAFLSTVDNVYVTSFTSSDAGGYYFNGCSFGIIPKK.

The first 23 residues, 1–23 (MKILYSLLLISSIILNTVLNISS), serve as a signal peptide directing secretion. An N-linked (GlcNAc...) asparagine glycan is attached at N63. Residues 172–195 (EQTQPPTQPPTQPPTQPPTPPPFT) form a disordered region. Pro residues predominate over residues 177–194 (PTQPPTQPPTQPPTPPPF). N222, N591, and N811 each carry an N-linked (GlcNAc...) asparagine glycan.

It belongs to the serine-aspartate repeat-containing protein (SDr) family.

The protein localises to the secreted. This chain is Colossin-C (colC), found in Dictyostelium discoideum (Social amoeba).